The chain runs to 1274 residues: VWFA and cache domain-containing protein 1 (1274 aa).

Positions 1–35 (MARQPEEEETAVARARRPPLWLLCLVACWLLGAGA) are cleaved as a signal peptide. Residues 36-1095 (EADFSILDEA…ITLNMIKSAP (1060 aa)) lie on the Extracellular side of the membrane. Asn145 carries N-linked (GlcNAc...) asparagine glycosylation. Residues 228-443 (HIVVILDHGA…TTVGRFYTNL (216 aa)) enclose the VWFA domain. Cache domains lie at 453-532 (FSLP…SEPP) and 772-853 (LTGP…HPTL). Residues 1096–1116 (VGPVAGGIMGCIMVLVLAVYA) traverse the membrane as a helical segment. Residues 1117–1274 (YRHQIHRRSH…VTVHTVDAEC (158 aa)) are Cytoplasmic-facing. A disordered region spans residues 1179-1227 (PERRRRYWGRSGTESDHGYSTMSPQEDSENPPCNNDPLSAGVDVGNHDE). A compositionally biased stretch (polar residues) spans 1196–1215 (GYSTMSPQEDSENPPCNNDP).

The protein belongs to the calcium channel subunit alpha-2/delta family.

The protein localises to the membrane. Functionally, may regulate voltage-dependent calcium channels. The polypeptide is VWFA and cache domain-containing protein 1 (CACHD1) (Homo sapiens (Human)).